The sequence spans 529 residues: Tyrosinase (529 aa).

The signal sequence occupies residues 1 to 18 (MFLFAMGLLLVILQPSTG). Residues 19–476 (QFPRVCANTQ…YLKQAHQIWP (458 aa)) lie on the Lumenal, melanosome side of the membrane. Residues Asn-86, Asn-111, and Asn-161 are each glycosylated (N-linked (GlcNAc...) asparagine). Cu cation-binding residues include His-180, His-202, and His-211. N-linked (GlcNAc...) asparagine glycans are attached at residues Asn-230 and Asn-290. The interval 293–313 (SEGPILRNPGNNDKSRTPRLP) is disordered. Residues Asn-337 and Asn-356 are each glycosylated (N-linked (GlcNAc...) asparagine). Cu cation is bound by residues His-363 and His-367. N-linked (GlcNAc...) asparagine glycosylation is present at Asn-371. His-390 contributes to the Cu cation binding site. The helical transmembrane segment at 477–497 (WLVGAAVIGGIITAVLSGLIL) threads the bilayer. Over 498–529 (ACRKKRKGTSPEIQPLLTESEDYNNVSYQSHF) the chain is Cytoplasmic.

It belongs to the tyrosinase family. Cu(2+) is required as a cofactor.

It is found in the melanosome membrane. It localises to the melanosome. It catalyses the reaction 2 L-dopa + O2 = 2 L-dopaquinone + 2 H2O. The catalysed reaction is L-tyrosine + O2 = L-dopaquinone + H2O. This is a copper-containing oxidase that functions in the formation of pigments such as melanins and other polyphenolic compounds. Catalyzes the initial and rate limiting step in the cascade of reactions leading to melanin production from tyrosine. In addition to hydroxylating tyrosine to DOPA (3,4-dihydroxyphenylalanine), also catalyzes the oxidation of DOPA to DOPA-quinone, and possibly the oxidation of DHI (5,6-dihydroxyindole) to indole-5,6 quinone. The sequence is that of Tyrosinase (TYR) from Gallus gallus (Chicken).